A 681-amino-acid chain; its full sequence is Potassium-transporting ATPase ATP-binding subunit (681 aa).

4 helical membrane passes run L30–I50, L59–A79, I216–T236, and I255–I275. The 4-aspartylphosphate intermediate role is filled by D306. Residues D343, E347, F376–S383, and K394 each bind ATP. Mg(2+)-binding residues include D517 and D521. A run of 3 helical transmembrane segments spans residues F587 to M607, A615 to L635, and L661 to V681.

The protein belongs to the cation transport ATPase (P-type) (TC 3.A.3) family. Type IA subfamily. The system is composed of three essential subunits: KdpA, KdpB and KdpC.

The protein localises to the cell membrane. It catalyses the reaction K(+)(out) + ATP + H2O = K(+)(in) + ADP + phosphate + H(+). In terms of biological role, part of the high-affinity ATP-driven potassium transport (or Kdp) system, which catalyzes the hydrolysis of ATP coupled with the electrogenic transport of potassium into the cytoplasm. This subunit is responsible for energy coupling to the transport system and for the release of the potassium ions to the cytoplasm. In Listeria monocytogenes serotype 4a (strain HCC23), this protein is Potassium-transporting ATPase ATP-binding subunit.